A 305-amino-acid polypeptide reads, in one-letter code: Acetylglutamate kinase (305 aa).

Substrate contacts are provided by residues 67-68 (GG), R89, and N190.

This sequence belongs to the acetylglutamate kinase family. ArgB subfamily.

It is found in the cytoplasm. It catalyses the reaction N-acetyl-L-glutamate + ATP = N-acetyl-L-glutamyl 5-phosphate + ADP. Its pathway is amino-acid biosynthesis; L-arginine biosynthesis; N(2)-acetyl-L-ornithine from L-glutamate: step 2/4. Functionally, catalyzes the ATP-dependent phosphorylation of N-acetyl-L-glutamate. The chain is Acetylglutamate kinase from Bifidobacterium animalis subsp. lactis (strain AD011).